The sequence spans 267 residues: Outer membrane protein assembly factor BamD (267 aa).

Positions 1–16 are cleaved as a signal peptide; it reads MKKILLTVSLGLALSA. C17 is lipidated: N-palmitoyl cysteine. The S-diacylglycerol cysteine moiety is linked to residue C17.

The protein belongs to the BamD family. Part of the Bam complex.

The protein resides in the cell outer membrane. Its function is as follows. Part of the outer membrane protein assembly complex, which is involved in assembly and insertion of beta-barrel proteins into the outer membrane. Required for efficient transformation of Neisseria meningitidis by species-related DNA. This Neisseria meningitidis serogroup A / serotype 4A (strain DSM 15465 / Z2491) protein is Outer membrane protein assembly factor BamD.